Consider the following 166-residue polypeptide: V-type proton ATPase subunit c4 (166 aa).

The Lumenal portion of the chain corresponds to M1 to P13. A helical transmembrane segment spans residues F14 to G34. Over T35–S56 the chain is Cytoplasmic. A helical membrane pass occupies residues I57–I77. The Lumenal segment spans residues S78–H96. Residues L97 to G118 traverse the membrane as a helical segment. At D119–K130 the chain is on the cytoplasmic side. A helical membrane pass occupies residues L131–L156. Over S157–E166 the chain is Lumenal.

The protein belongs to the V-ATPase proteolipid subunit family. In terms of assembly, V-ATPase is a heteromultimeric enzyme composed of a peripheral catalytic V1 complex (components A to H) attached to an integral membrane V0 proton pore complex (components: a, c, c'', d and e). The proteolipid components c and c'' are present as a hexameric ring that forms the proton-conducting pore. Interacts with APD2.

The protein localises to the vacuole membrane. Proton-conducting pore forming subunit of the membrane integral V0 complex of vacuolar ATPase. V-ATPase is responsible for acidifying a variety of intracellular compartments in eukaryotic cells. The chain is V-type proton ATPase subunit c4 (VHA-c4) from Arabidopsis thaliana (Mouse-ear cress).